Reading from the N-terminus, the 206-residue chain is Ras-related protein RABG3a (206 aa).

15–22 provides a ligand contact to GTP; the sequence is GDSGVGKT. An Effector region motif is present at residues 37-45; the sequence is YKATIGADF. GTP contacts are provided by residues 63–67, 125–128, and 158–159; these read DTAGQ, NKID, and SA. Residues Cys-204 and Cys-206 are each lipidated (S-geranylgeranyl cysteine). Position 206 is a cysteine methyl ester (Cys-206).

This sequence belongs to the small GTPase superfamily. Rab family.

The protein resides in the cell membrane. In terms of biological role, intracellular vesicle trafficking and protein transport. The sequence is that of Ras-related protein RABG3a (RABG3A) from Arabidopsis thaliana (Mouse-ear cress).